The following is a 326-amino-acid chain: N-acetyl-gamma-glutamyl-phosphate reductase (326 aa).

Cys-155 is an active-site residue.

The protein belongs to the NAGSA dehydrogenase family. Type 1 subfamily.

The protein localises to the cytoplasm. The catalysed reaction is N-acetyl-L-glutamate 5-semialdehyde + phosphate + NADP(+) = N-acetyl-L-glutamyl 5-phosphate + NADPH + H(+). It participates in amino-acid biosynthesis; L-arginine biosynthesis; N(2)-acetyl-L-ornithine from L-glutamate: step 3/4. Its function is as follows. Catalyzes the NADPH-dependent reduction of N-acetyl-5-glutamyl phosphate to yield N-acetyl-L-glutamate 5-semialdehyde. This chain is N-acetyl-gamma-glutamyl-phosphate reductase, found in Shewanella denitrificans (strain OS217 / ATCC BAA-1090 / DSM 15013).